Consider the following 165-residue polypeptide: Chorismate pyruvate-lyase (165 aa).

Substrate-binding residues include Met35, Arg77, Leu115, and Glu156.

Belongs to the UbiC family. In terms of assembly, monomer.

The protein localises to the cytoplasm. The catalysed reaction is chorismate = 4-hydroxybenzoate + pyruvate. The protein operates within cofactor biosynthesis; ubiquinone biosynthesis. Its function is as follows. Removes the pyruvyl group from chorismate, with concomitant aromatization of the ring, to provide 4-hydroxybenzoate (4HB) for the ubiquinone pathway. This Citrobacter koseri (strain ATCC BAA-895 / CDC 4225-83 / SGSC4696) protein is Chorismate pyruvate-lyase.